We begin with the raw amino-acid sequence, 326 residues long: Phosphate acyltransferase (326 aa).

The protein belongs to the PlsX family. In terms of assembly, homodimer. Probably interacts with PlsY.

It localises to the cytoplasm. It carries out the reaction a fatty acyl-[ACP] + phosphate = an acyl phosphate + holo-[ACP]. It functions in the pathway lipid metabolism; phospholipid metabolism. In terms of biological role, catalyzes the reversible formation of acyl-phosphate (acyl-PO(4)) from acyl-[acyl-carrier-protein] (acyl-ACP). This enzyme utilizes acyl-ACP as fatty acyl donor, but not acyl-CoA. In Macrococcus caseolyticus (strain JCSC5402) (Macrococcoides caseolyticum), this protein is Phosphate acyltransferase.